We begin with the raw amino-acid sequence, 202 residues long: 3-isopropylmalate dehydratase small subunit (202 aa).

It belongs to the LeuD family. LeuD type 1 subfamily. Heterodimer of LeuC and LeuD.

It carries out the reaction (2R,3S)-3-isopropylmalate = (2S)-2-isopropylmalate. It participates in amino-acid biosynthesis; L-leucine biosynthesis; L-leucine from 3-methyl-2-oxobutanoate: step 2/4. Its function is as follows. Catalyzes the isomerization between 2-isopropylmalate and 3-isopropylmalate, via the formation of 2-isopropylmaleate. The polypeptide is 3-isopropylmalate dehydratase small subunit (Rhizobium etli (strain CIAT 652)).